Consider the following 411-residue polypeptide: Secretion apparatus protein BsaZ (411 aa).

The next 4 membrane-spanning stretches (helical) occupy residues 28 to 48 (IVAL…VDLT), 80 to 100 (IAAP…LVQS), 137 to 157 (ALLY…LYHA), and 175 to 195 (IVLT…VLIL). The segment at 341–411 (AANRGGPPPE…APARTGDQNA (71 aa)) is disordered. Residues 370–404 (DACADNAFPDDAPPGAAAPNAGSPDGPAPDGGAPA) are compositionally biased toward low complexity.

Belongs to the type III secretion exporter family.

It localises to the cell membrane. Functionally, part of the bsa type III secretion system, is involved in the intracellular replication of invading bacteria inside the host cell. Probably necessary for the lysis of the vacuole membrane and escape into the host cell cytoplasm. This Burkholderia pseudomallei (strain 1710b) protein is Secretion apparatus protein BsaZ (bsaZ).